Here is an 80-residue protein sequence, read N- to C-terminus: Exodeoxyribonuclease 7 small subunit (80 aa).

The protein belongs to the XseB family. In terms of assembly, heterooligomer composed of large and small subunits.

It is found in the cytoplasm. The catalysed reaction is Exonucleolytic cleavage in either 5'- to 3'- or 3'- to 5'-direction to yield nucleoside 5'-phosphates.. Bidirectionally degrades single-stranded DNA into large acid-insoluble oligonucleotides, which are then degraded further into small acid-soluble oligonucleotides. The polypeptide is Exodeoxyribonuclease 7 small subunit (Rickettsia africae (strain ESF-5)).